Here is an 889-residue protein sequence, read N- to C-terminus: Terminal uridylyltransferase 3 (889 aa).

The C2H2-type; atypical zinc-finger motif lies at 123–151 (VRCDLCAKMIESRDEEQIQEHFQVHHAAL). Zn(2+)-binding residues include Cys125, Cys128, His143, and His148. UTP contacts are provided by residues Ser225 and 236–239 (SDAD). 2 residues coordinate Mg(2+): Asp237 and Asp239. Arg286 is a binding site for RNA. UTP is bound by residues 394 to 398 (GVRNS), Lys419, Lys423, and 437 to 438 (SY). The region spanning 505–572 (LGGLIPLFFL…LCIDDPYEDN (68 aa)) is the PAP-associated domain. Residues 565 to 574 (IDDPYEDNFN) carry the Nucleotide recognition motif (NRM) motif. 2 disordered regions span residues 675–702 (NNKSKEGDDDAEGVTNNQEGEPPDHVES) and 829–849 (RKKSKGSKKRKNAVRRGNHAG). Basic residues predominate over residues 829–846 (RKKSKGSKKRKNAVRRGN).

The protein belongs to the DNA polymerase type-B-like family. Requires Mg(2+) as cofactor. Mn(2+) is required as a cofactor.

The protein resides in the cytoplasm. It catalyses the reaction RNA(n) + UTP = RNA(n)-3'-uridine ribonucleotide + diphosphate. Terminal uridylyltransferase which catalyzes the addition of Us to the 3'-hydroxyl group of single-stranded RNAs. Does not mediate RNA-independent UTP polymerization. This Trypanosoma brucei brucei protein is Terminal uridylyltransferase 3.